Reading from the N-terminus, the 489-residue chain is Cobyric acid synthase (489 aa).

A GATase cobBQ-type domain is found at 251–439 (RLTVVAPVYP…LHGLFDTPAA (189 aa)). Residue cysteine 332 is the Nucleophile of the active site. Residue histidine 431 is part of the active site.

This sequence belongs to the CobB/CobQ family. CobQ subfamily.

Its pathway is cofactor biosynthesis; adenosylcobalamin biosynthesis. Functionally, catalyzes amidations at positions B, D, E, and G on adenosylcobyrinic A,C-diamide. NH(2) groups are provided by glutamine, and one molecule of ATP is hydrogenolyzed for each amidation. In Aromatoleum aromaticum (strain DSM 19018 / LMG 30748 / EbN1) (Azoarcus sp. (strain EbN1)), this protein is Cobyric acid synthase.